The primary structure comprises 393 residues: Phosphoglycerate kinase (393 aa).

Residues 21–23 (DLN), R36, 59–62 (HLGR), R113, and R146 contribute to the substrate site. ATP is bound by residues K197, E319, and 345 to 348 (GGDT).

Belongs to the phosphoglycerate kinase family. In terms of assembly, monomer.

It is found in the cytoplasm. It carries out the reaction (2R)-3-phosphoglycerate + ATP = (2R)-3-phospho-glyceroyl phosphate + ADP. Its pathway is carbohydrate degradation; glycolysis; pyruvate from D-glyceraldehyde 3-phosphate: step 2/5. This chain is Phosphoglycerate kinase, found in Nitratidesulfovibrio vulgaris (strain ATCC 29579 / DSM 644 / CCUG 34227 / NCIMB 8303 / VKM B-1760 / Hildenborough) (Desulfovibrio vulgaris).